A 168-amino-acid polypeptide reads, in one-letter code: Large ribosomal subunit protein uL10 (168 aa).

The protein belongs to the universal ribosomal protein uL10 family. In terms of assembly, part of the ribosomal stalk of the 50S ribosomal subunit. The N-terminus interacts with L11 and the large rRNA to form the base of the stalk. The C-terminus forms an elongated spine to which L12 dimers bind in a sequential fashion forming a multimeric L10(L12)X complex.

Forms part of the ribosomal stalk, playing a central role in the interaction of the ribosome with GTP-bound translation factors. The polypeptide is Large ribosomal subunit protein uL10 (Ralstonia nicotianae (strain ATCC BAA-1114 / GMI1000) (Ralstonia solanacearum)).